Consider the following 461-residue polypeptide: tRNA modification GTPase MnmE (461 aa).

Lysine 32, glutamate 89, and lysine 128 together coordinate (6S)-5-formyl-5,6,7,8-tetrahydrofolate. Residues 224–387 enclose the TrmE-type G domain; sequence GHALSIVGKP…LSQKISAFFP (164 aa). Residue asparagine 234 participates in K(+) binding. GTP-binding positions include 234-239, 253-259, and 278-281; these read NAGKSS, SDIKGTT, and DTAG. Mg(2+) is bound at residue serine 238. Residues serine 253, isoleucine 255, and threonine 258 each contribute to the K(+) site. Threonine 259 lines the Mg(2+) pocket. Lysine 461 is a (6S)-5-formyl-5,6,7,8-tetrahydrofolate binding site.

This sequence belongs to the TRAFAC class TrmE-Era-EngA-EngB-Septin-like GTPase superfamily. TrmE GTPase family. Homodimer. Heterotetramer of two MnmE and two MnmG subunits. It depends on K(+) as a cofactor.

It localises to the cytoplasm. In terms of biological role, exhibits a very high intrinsic GTPase hydrolysis rate. Involved in the addition of a carboxymethylaminomethyl (cmnm) group at the wobble position (U34) of certain tRNAs, forming tRNA-cmnm(5)s(2)U34. In Helicobacter pylori (strain ATCC 700392 / 26695) (Campylobacter pylori), this protein is tRNA modification GTPase MnmE.